A 123-amino-acid polypeptide reads, in one-letter code: Ribosome-binding factor A (123 aa).

Belongs to the RbfA family. Monomer. Binds 30S ribosomal subunits, but not 50S ribosomal subunits or 70S ribosomes.

It localises to the cytoplasm. Functionally, one of several proteins that assist in the late maturation steps of the functional core of the 30S ribosomal subunit. Associates with free 30S ribosomal subunits (but not with 30S subunits that are part of 70S ribosomes or polysomes). Required for efficient processing of 16S rRNA. May interact with the 5'-terminal helix region of 16S rRNA. The sequence is that of Ribosome-binding factor A from Ralstonia nicotianae (strain ATCC BAA-1114 / GMI1000) (Ralstonia solanacearum).